We begin with the raw amino-acid sequence, 70 residues long: Omega-conotoxin-like Bu1 (70 aa).

The signal sequence occupies residues 1-22 (MKLTCVAIVAVLLLTACQLITA). Positions 23–45 (EDSRGTQLHRALRKTTKLSVSTR) are excised as a propeptide. 3 disulfide bridges follow: Cys-46–Cys-61, Cys-53–Cys-65, and Cys-60–Cys-70.

It belongs to the conotoxin O1 superfamily. Expressed by the venom duct.

The protein resides in the secreted. Functionally, omega-conotoxins act at presynaptic membranes, they bind and block voltage-gated calcium channels (Cav). The chain is Omega-conotoxin-like Bu1 from Conus bullatus (Bubble cone).